The chain runs to 662 residues: UvrABC system protein B (662 aa).

One can recognise a Helicase ATP-binding domain in the interval 25–412 (EGIEKGLKMQ…SQKIVEQIIR (388 aa)). 38-45 (GVTGSGKT) contributes to the ATP binding site. The Beta-hairpin signature appears at 91-114 (YYDYYQPEAYLPATDTYIEKDSAI). The Helicase C-terminal domain maps to 429-595 (QVDDLYGEIK…TVQKAVRDVI (167 aa)). Residues 622–657 (KQYVEKLTREMKEAAKALEFEKAAMLRDLIIELRAQ) enclose the UVR domain.

This sequence belongs to the UvrB family. As to quaternary structure, forms a heterotetramer with UvrA during the search for lesions. Interacts with UvrC in an incision complex.

It localises to the cytoplasm. In terms of biological role, the UvrABC repair system catalyzes the recognition and processing of DNA lesions. A damage recognition complex composed of 2 UvrA and 2 UvrB subunits scans DNA for abnormalities. Upon binding of the UvrA(2)B(2) complex to a putative damaged site, the DNA wraps around one UvrB monomer. DNA wrap is dependent on ATP binding by UvrB and probably causes local melting of the DNA helix, facilitating insertion of UvrB beta-hairpin between the DNA strands. Then UvrB probes one DNA strand for the presence of a lesion. If a lesion is found the UvrA subunits dissociate and the UvrB-DNA preincision complex is formed. This complex is subsequently bound by UvrC and the second UvrB is released. If no lesion is found, the DNA wraps around the other UvrB subunit that will check the other stand for damage. This chain is UvrABC system protein B, found in Carboxydothermus hydrogenoformans (strain ATCC BAA-161 / DSM 6008 / Z-2901).